Reading from the N-terminus, the 338-residue chain is Histone acetyltransferase SAS2 (338 aa).

Positions 1 to 15 (MARSLSQSLTATTQK) are enriched in polar residues. The tract at residues 1 to 31 (MARSLSQSLTATTQKLKGKKNGGKGKNKPSA) is disordered. Residues 16–31 (LKGKKNGGKGKNKPSA) are compositionally biased toward basic residues. Residues 45-338 (LNERNIRQIQ…LKDEYLLIDD (294 aa)) form the MYST-type HAT domain. Residues 100–126 (LFVCEYCFKYTDDQTRFVGHVASCPFQ) form a C2HC MYST-type zinc finger. Residue K168 is modified to N6-acetyllysine; by autocatalysis. Acetyl-CoA contacts are provided by residues 209–211 (ILI) and 216–222 (QRRGLGL). Residue E242 is the Proton donor/acceptor of the active site. Positions 246 and 323 each coordinate acetyl-CoA.

The protein belongs to the MYST (SAS/MOZ) family. In terms of assembly, interacts with CAC1. Component of the SAS complex, at least composed of SAS2, SAS4 and SAS5. These three proteins constitute the core of the complex and are sufficient to acetylate histones. SAS4 is essential for HAT activity of the complex, while SAS5 is required for maxiaml HAT activity. Post-translationally, autoacetylation at Lys-168 is required for proper function.

It localises to the cytoplasm. The protein resides in the nucleus. It catalyses the reaction L-lysyl-[protein] + acetyl-CoA = N(6)-acetyl-L-lysyl-[protein] + CoA + H(+). In terms of biological role, histone acetyltransferase (HAT) subunit of the SAS complex, a multiprotein complex that acetylates 'Lys-16' of histone H4 and 'Lys-14' of histone H3. The SAS complex is however unable to acetylate nucleosomal histones. The complex is involved in transcriptional silencing at telomeres and at HML locus. Also involved in rDNA silencing and G0 control. This is Histone acetyltransferase SAS2 (SAS2) from Saccharomyces cerevisiae (strain ATCC 204508 / S288c) (Baker's yeast).